Consider the following 150-residue polypeptide: D-aminoacyl-tRNA deacylase (150 aa).

The Gly-cisPro motif, important for rejection of L-amino acids motif lies at 140–141 (GP).

This sequence belongs to the DTD family. In terms of assembly, homodimer.

It is found in the cytoplasm. The enzyme catalyses glycyl-tRNA(Ala) + H2O = tRNA(Ala) + glycine + H(+). The catalysed reaction is a D-aminoacyl-tRNA + H2O = a tRNA + a D-alpha-amino acid + H(+). In terms of biological role, an aminoacyl-tRNA editing enzyme that deacylates mischarged D-aminoacyl-tRNAs. Also deacylates mischarged glycyl-tRNA(Ala), protecting cells against glycine mischarging by AlaRS. Acts via tRNA-based rather than protein-based catalysis; rejects L-amino acids rather than detecting D-amino acids in the active site. By recycling D-aminoacyl-tRNA to D-amino acids and free tRNA molecules, this enzyme counteracts the toxicity associated with the formation of D-aminoacyl-tRNA entities in vivo and helps enforce protein L-homochirality. The protein is D-aminoacyl-tRNA deacylase (DTD1) of Kluyveromyces lactis (strain ATCC 8585 / CBS 2359 / DSM 70799 / NBRC 1267 / NRRL Y-1140 / WM37) (Yeast).